The primary structure comprises 287 residues: Protease HtpX homolog (287 aa).

Helical transmembrane passes span Val-4–Leu-24 and Leu-35–Leu-53. His-139 provides a ligand contact to Zn(2+). The active site involves Glu-140. His-143 is a Zn(2+) binding site. The next 2 helical transmembrane spans lie at Gly-147–Ser-167 and Ala-194–Phe-214. Glu-219 lines the Zn(2+) pocket.

The protein belongs to the peptidase M48B family. Zn(2+) is required as a cofactor.

The protein localises to the cell inner membrane. This chain is Protease HtpX homolog, found in Desulfotalea psychrophila (strain LSv54 / DSM 12343).